Here is a 120-residue protein sequence, read N- to C-terminus: Large ribosomal subunit protein uL22 (120 aa).

Residues 1–25 (MFVNKKYTAKGKNLPSSPKKVRPIA) are disordered.

It belongs to the universal ribosomal protein uL22 family. Part of the 50S ribosomal subunit.

Its function is as follows. This protein binds specifically to 23S rRNA; its binding is stimulated by other ribosomal proteins, e.g. L4, L17, and L20. It is important during the early stages of 50S assembly. It makes multiple contacts with different domains of the 23S rRNA in the assembled 50S subunit and ribosome. In terms of biological role, the globular domain of the protein is located near the polypeptide exit tunnel on the outside of the subunit, while an extended beta-hairpin is found that lines the wall of the exit tunnel in the center of the 70S ribosome. In Borrelia duttonii (strain Ly), this protein is Large ribosomal subunit protein uL22.